The primary structure comprises 559 residues: Putative protease Do-like 3, mitochondrial (559 aa).

A mitochondrion-targeting transit peptide spans 1-48 (MSFLCVRTVSRFRSLSRALAPGFLLLHGNAVPKTAVFFRQQSSNTRLF). The segment at 59–81 (ENNSKSALKNKLPPGKEVSSKDA) is disordered. The segment at 100-292 (VFTVSSKPRL…FLNAIEESGE (193 aa)) is serine protease. Residues histidine 138, aspartate 169, and serine 247 each act as charge relay system in the active site. The PDZ domain maps to 300-380 (NLTYQKMDND…HLVSMKKPCE (81 aa)). The segment at 538-559 (SEDLQPKQQNKRSKVPPKSKEH) is disordered. The span at 546-559 (QNKRSKVPPKSKEH) shows a compositional bias: basic residues.

It belongs to the peptidase S1C family.

It is found in the mitochondrion matrix. Putative serine protease. In Arabidopsis thaliana (Mouse-ear cress), this protein is Putative protease Do-like 3, mitochondrial (DEGP3).